A 498-amino-acid chain; its full sequence is ATP synthase subunit beta, chloroplastic (498 aa).

172–179 (GGAGVGKT) serves as a coordination point for ATP.

This sequence belongs to the ATPase alpha/beta chains family. As to quaternary structure, F-type ATPases have 2 components, CF(1) - the catalytic core - and CF(0) - the membrane proton channel. CF(1) has five subunits: alpha(3), beta(3), gamma(1), delta(1), epsilon(1). CF(0) has four main subunits: a(1), b(1), b'(1) and c(9-12).

The protein localises to the plastid. Its subcellular location is the chloroplast thylakoid membrane. The catalysed reaction is ATP + H2O + 4 H(+)(in) = ADP + phosphate + 5 H(+)(out). In terms of biological role, produces ATP from ADP in the presence of a proton gradient across the membrane. The catalytic sites are hosted primarily by the beta subunits. This Spinacia oleracea (Spinach) protein is ATP synthase subunit beta, chloroplastic.